Here is a 227-residue protein sequence, read N- to C-terminus: MSVVPPNRSQTGWPRGVTQFGNKYIQQTKPLTLERTINLYPLTNYTFGTKEPLYEKDSSVAARFQRMREEFDKIGMRRTVEGVLIVHEHRLPHVLLLQLGTTFFKLPGGELNPGEDEVEGLKRLMTEILGRQDGVLQDWVIDDCIGNWWRPNFEPPQYPYIPAHITKPKEHKKLFLVQLQEKALFAVPKNYKLVAAPLFELYDNAPGYGPIISSLPQLLSRFNFIYN.

S2 bears the N-acetylserine mark. A necessary for RNA-binding region spans residues 2–147; sequence SVVPPNRSQT…DWVIDDCIGN (146 aa). R15 is subject to Omega-N-methylarginine. Residues K23 and K29 each carry the N6-acetyllysine modification. Position 40 is a phosphotyrosine (Y40). The residue at position 56 (K56) is an N6-acetyllysine. Residues 76-201 enclose the Nudix hydrolase domain; that stretch reads MRRTVEGVLI…KLVAAPLFEL (126 aa). Residues 81–160 are necessary for interactions with PAPOLA and PABPN1; sequence EGVLIVHEHR…PNFEPPQYPY (80 aa). Positions 102 to 104 are interaction with RNA; sequence TFF. The short motif at 109–130 is the Nudix box element; the sequence is GELNPGEDEVEGLKRLMTEILG.

It belongs to the Nudix hydrolase family. CPSF5 subfamily. As to quaternary structure, homodimer (via N- and C-terminus); binds RNA as homodimer. Component of the cleavage factor Im (CFIm) complex which is a heterotetramer composed of two subunits of NUDT21/CPSF5 and two subunits of CPSF6 or CPSF7 or a heterodimer of CPSF6 and CPSF7. The cleavage factor Im (CFIm) complex associates with the CPSF and CSTF complexes to promote the assembly of the core mRNA 3'-processing machinery. Interacts with CPSF6 (via the RRM domain); this interaction is direct and enhances binding to RNA. Interacts with CPSF7. Interacts with FIP1L1; this interaction occurs in a RNA sequence-specific manner. Interacts with PABPN1. Interacts (via N-terminus) with PAPOLA (via C-terminus); this interaction is direct and diminished by acetylation. Interacts with SNRNP70. Interacts with VIRMA. Post-translationally, acetylated mainly by p300/CBP, recruited to the complex by CPSF6. Acetylation decreases interaction with PAPAO. Deacetylated by the class I/II HDACs, HDAC1, HDAC3 and HDAC10, and by the class III HDACs, SIRT1 and SIRT2.

Its subcellular location is the nucleus. It is found in the cytoplasm. Functionally, component of the cleavage factor Im (CFIm) complex that functions as an activator of the pre-mRNA 3'-end cleavage and polyadenylation processing required for the maturation of pre-mRNA into functional mRNAs. CFIm contributes to the recruitment of multiprotein complexes on specific sequences on the pre-mRNA 3'-end, so called cleavage and polyadenylation signals (pA signals). Most pre-mRNAs contain multiple pA signals, resulting in alternative cleavage and polyadenylation (APA) producing mRNAs with variable 3'-end formation. The CFIm complex acts as a key regulator of cleavage and polyadenylation site choice during APA through its binding to 5'-UGUA-3' elements localized in the 3'-untranslated region (UTR) for a huge number of pre-mRNAs. NUDT21/CPSF5 activates indirectly the mRNA 3'-processing machinery by recruiting CPSF6 and/or CPSF7. Binds to 5'-UGUA-3' elements localized upstream of pA signals that act as enhancers of pre-mRNA 3'-end processing. The homodimer mediates simultaneous sequence-specific recognition of two 5'-UGUA-3' elements within the pre-mRNA. Plays a role in somatic cell fate transitions and pluripotency by regulating widespread changes in gene expression through an APA-dependent function. Binds to chromatin. Binds to, but does not hydrolyze mono- and di-adenosine nucleotides. The polypeptide is Cleavage and polyadenylation specificity factor subunit 5 (NUDT21) (Bos taurus (Bovine)).